The sequence spans 250 residues: uncharacterized protein (250 aa).

The a divalent metal cation site is built by Glu97, Glu99, and Asp128.

This sequence belongs to the FAH family.

This is an uncharacterized protein from Archaeoglobus fulgidus (strain ATCC 49558 / DSM 4304 / JCM 9628 / NBRC 100126 / VC-16).